The following is a 219-amino-acid chain: Protein OPG170 (219 aa).

Residues 1–16 (MYSLLFIILMCIPFSF) form the signal peptide. An N-linked (GlcNAc...) asparagine; by host glycan is attached at Asn-70.

This sequence belongs to the orthopoxvirus OPG170 family.

The protein resides in the secreted. Functionally, may interact with several cellular chemokines to interfere with chemokine-glycosaminoglycan (GAG) interactions at the cell surface to alter chemotaxis of nearby responsive cells. The protein is Protein OPG170 (OPG170) of Vaccinia virus (strain Copenhagen) (VACV).